Consider the following 536-residue polypeptide: Light-independent protochlorophyllide reductase subunit B (536 aa).

A [4Fe-4S] cluster-binding site is contributed by Asp36. Catalysis depends on Asp292, which acts as the Proton donor. Substrate is bound at residue 427–428; that stretch reads GL. The segment covering 448 to 469 has biased composition (low complexity); sequence SHLGHLGGHQSQTEQQQSQAAT. The tract at residues 448–489 is disordered; that stretch reads SHLGHLGGHQSQTEQQQSQAATNPSTQSNADSSSEESPLWTP. Positions 470 to 483 are enriched in polar residues; sequence NPSTQSNADSSSEE.

Belongs to the ChlB/BchB/BchZ family. As to quaternary structure, protochlorophyllide reductase is composed of three subunits; ChlL, ChlN and ChlB. Forms a heterotetramer of two ChlB and two ChlN subunits. It depends on [4Fe-4S] cluster as a cofactor.

It carries out the reaction chlorophyllide a + oxidized 2[4Fe-4S]-[ferredoxin] + 2 ADP + 2 phosphate = protochlorophyllide a + reduced 2[4Fe-4S]-[ferredoxin] + 2 ATP + 2 H2O. Its pathway is porphyrin-containing compound metabolism; chlorophyll biosynthesis (light-independent). Its function is as follows. Component of the dark-operative protochlorophyllide reductase (DPOR) that uses Mg-ATP and reduced ferredoxin to reduce ring D of protochlorophyllide (Pchlide) to form chlorophyllide a (Chlide). This reaction is light-independent. The NB-protein (ChlN-ChlB) is the catalytic component of the complex. The protein is Light-independent protochlorophyllide reductase subunit B of Prochlorococcus marinus (strain MIT 9313).